The sequence spans 431 residues: Glutamate-1-semialdehyde 2,1-aminomutase (431 aa).

Residue K264 is modified to N6-(pyridoxal phosphate)lysine.

This sequence belongs to the class-III pyridoxal-phosphate-dependent aminotransferase family. HemL subfamily. Homodimer. Pyridoxal 5'-phosphate serves as cofactor.

Its subcellular location is the cytoplasm. The catalysed reaction is (S)-4-amino-5-oxopentanoate = 5-aminolevulinate. It functions in the pathway porphyrin-containing compound metabolism; protoporphyrin-IX biosynthesis; 5-aminolevulinate from L-glutamyl-tRNA(Glu): step 2/2. The polypeptide is Glutamate-1-semialdehyde 2,1-aminomutase (Clostridium beijerinckii (strain ATCC 51743 / NCIMB 8052) (Clostridium acetobutylicum)).